We begin with the raw amino-acid sequence, 520 residues long: Cholesterol side-chain cleavage enzyme, mitochondrial (520 aa).

The transit peptide at 1–36 directs the protein to the mitochondrion; sequence MLAKGLSLRSVLAKGCQPFLSPTWQSSVLATGGGAN. Position 458 (Cys-458) interacts with heme.

This sequence belongs to the cytochrome P450 family. As to quaternary structure, interacts with FDX1/adrenodoxin. The cofactor is heme.

Its subcellular location is the mitochondrion inner membrane. The catalysed reaction is 6 reduced [adrenodoxin] + cholesterol + 3 O2 + 6 H(+) = 4-methylpentanal + pregnenolone + 6 oxidized [adrenodoxin] + 4 H2O. It carries out the reaction 2 reduced [adrenodoxin] + cholesterol + O2 + 2 H(+) = (22R)-hydroxycholesterol + 2 oxidized [adrenodoxin] + H2O. The enzyme catalyses (22R)-hydroxycholesterol + 2 reduced [adrenodoxin] + O2 + 2 H(+) = (20R,22R)-20,22-dihydroxycholesterol + 2 oxidized [adrenodoxin] + H2O. It catalyses the reaction (20R,22R)-20,22-dihydroxycholesterol + 2 reduced [adrenodoxin] + O2 + 2 H(+) = 4-methylpentanal + pregnenolone + 2 oxidized [adrenodoxin] + 2 H2O. Its pathway is lipid metabolism; C21-steroid hormone metabolism. It functions in the pathway steroid metabolism; cholesterol metabolism. Its function is as follows. A cytochrome P450 monooxygenase that catalyzes the side-chain hydroxylation and cleavage of cholesterol to pregnenolone, the precursor of most steroid hormones. Catalyzes three sequential oxidation reactions of cholesterol, namely the hydroxylation at C22 followed with the hydroxylation at C20 to yield 20R,22R-hydroxycholesterol that is further cleaved between C20 and C22 to yield the C21-steroid pregnenolone and 4-methylpentanal. Mechanistically, uses molecular oxygen inserting one oxygen atom into a substrate and reducing the second into a water molecule. Two electrons are provided by NADPH via a two-protein mitochondrial transfer system comprising flavoprotein FDXR (adrenodoxin/ferredoxin reductase) and nonheme iron-sulfur protein FDX1 or FDX2 (adrenodoxin/ferredoxin). The chain is Cholesterol side-chain cleavage enzyme, mitochondrial (CYP11A1) from Mesocricetus auratus (Golden hamster).